Here is a 178-residue protein sequence, read N- to C-terminus: Large ribosomal subunit protein uL6 (178 aa).

This sequence belongs to the universal ribosomal protein uL6 family. In terms of assembly, part of the 50S ribosomal subunit.

This protein binds to the 23S rRNA, and is important in its secondary structure. It is located near the subunit interface in the base of the L7/L12 stalk, and near the tRNA binding site of the peptidyltransferase center. This Helicobacter pylori (strain P12) protein is Large ribosomal subunit protein uL6.